A 212-amino-acid polypeptide reads, in one-letter code: Thymidylate kinase (212 aa).

10–17 (GLEGAGKT) is a binding site for ATP.

It belongs to the thymidylate kinase family.

The catalysed reaction is dTMP + ATP = dTDP + ADP. Functionally, phosphorylation of dTMP to form dTDP in both de novo and salvage pathways of dTTP synthesis. The polypeptide is Thymidylate kinase (Baumannia cicadellinicola subsp. Homalodisca coagulata).